The primary structure comprises 1938 residues: Myosin-6 (1938 aa).

Residues 32–81 form the Myosin N-terminal SH3-like domain; it reads DIRTECFVPDDKEEYVKAKVVSREGGKVTAETENGKTVTIKEDQVMQQNP. The Myosin motor domain occupies 85-780; that stretch reads DKIEDMAMLT…LLGLLEEMRD (696 aa). Lysine 129 carries the post-translational modification N6,N6,N6-trimethyllysine. Position 178-185 (178-185) interacts with ATP; that stretch reads GESGAGKT. Residue threonine 379 is modified to Phosphothreonine. A Phosphoserine modification is found at serine 417. 2 actin-binding regions span residues 657-679 and 759-773; these read LNKL…IPNE and KFGH…GLLG. The 30-residue stretch at 783 to 812 folds into the IQ domain; sequence LSRIITRIQAQARGQLMRIEFKKIVERRDA. 2 calmodulin-binding regions span residues 790–807 and 816–833; these read IQAQ…KKIV and IQWN…PWMK. Residues 842 to 1938 adopt a coiled-coil conformation; the sequence is LKSAETEKEM…IGAKKMHDEE (1097 aa). A phosphoserine mark is found at serine 1090 and serine 1139. Phosphotyrosine is present on tyrosine 1261. Position 1271 is a phosphoserine (serine 1271). Residues threonine 1277 and threonine 1284 each carry the phosphothreonine modification. Serine 1309 bears the Phosphoserine mark. Tyrosine 1310 carries the phosphotyrosine modification. Threonine 1311 carries the phosphothreonine modification. Serine 1512 carries the post-translational modification Phosphoserine. Residue threonine 1515 is modified to Phosphothreonine. Positions 1909 to 1938 are disordered; that stretch reads EERADIAESQVNKLRAKSRDIGAKKMHDEE. Basic and acidic residues predominate over residues 1925 to 1938; the sequence is KSRDIGAKKMHDEE.

It belongs to the TRAFAC class myosin-kinesin ATPase superfamily. Myosin family. As to quaternary structure, muscle myosin is a hexameric protein that consists of 2 heavy chain subunits (MHC), 2 alkali light chain subunits (MLC) and 2 regulatory light chain subunits (MLC-2).

It localises to the cytoplasm. Its subcellular location is the myofibril. In terms of biological role, muscle contraction. The sequence is that of Myosin-6 (Myh6) from Mus musculus (Mouse).